Consider the following 454-residue polypeptide: Chromosomal replication initiator protein DnaA (454 aa).

The tract at residues 1–83 (MTEKEHFFWN…IKVEYVFDEA (83 aa)) is domain I, interacts with DnaA modulators. The segment at 83-113 (ALVSETKPTLANNDFSNKREQQTPDLPTLNS) is domain II. The interval 114 to 332 (DLNSKYTFDN…GALKDISLVA (219 aa)) is domain III, AAA+ region. ATP-binding residues include glycine 158, glycine 160, lysine 161, and threonine 162. Residues 333–454 (NVRQLDTITV…EIDTIKNKIK (122 aa)) form a domain IV, binds dsDNA region.

This sequence belongs to the DnaA family. In terms of assembly, oligomerizes as a right-handed, spiral filament on DNA at oriC.

It is found in the cytoplasm. In terms of biological role, plays an essential role in the initiation and regulation of chromosomal replication. ATP-DnaA binds to the origin of replication (oriC) to initiate formation of the DNA replication initiation complex once per cell cycle. Binds the DnaA box (a 9 base pair repeat at the origin) and separates the double-stranded (ds)DNA. Forms a right-handed helical filament on oriC DNA; dsDNA binds to the exterior of the filament while single-stranded (ss)DNA is stabiized in the filament's interior. The ATP-DnaA-oriC complex binds and stabilizes one strand of the AT-rich DNA unwinding element (DUE), permitting loading of DNA polymerase. After initiation quickly degrades to an ADP-DnaA complex that is not apt for DNA replication. Binds acidic phospholipids. The polypeptide is Chromosomal replication initiator protein DnaA (Streptococcus thermophilus (strain ATCC BAA-250 / LMG 18311)).